Here is a 368-residue protein sequence, read N- to C-terminus: Isocitrate dehydrogenase [NAD] regulatory subunit 3, mitochondrial (368 aa).

The transit peptide at 1 to 26 (MARRSVSIFNRLLANPPSPFTSLSRS) directs the protein to the mitochondrion.

It belongs to the isocitrate and isopropylmalate dehydrogenases family. Heterooligomer of catalytic and regulatory subunits. Interacts with 14-3-3-like proteins GRF1 GRF3 and GRF8. In terms of tissue distribution, mainly expressed at a low level in pollen.

It localises to the mitochondrion. Performs an essential role in the oxidative function of the citric acid cycle. The polypeptide is Isocitrate dehydrogenase [NAD] regulatory subunit 3, mitochondrial (IDH3) (Arabidopsis thaliana (Mouse-ear cress)).